We begin with the raw amino-acid sequence, 264 residues long: Proteasome assembly chaperone 2 (264 aa).

A Phosphothreonine modification is found at T137.

It belongs to the PSMG2 family. In terms of assembly, forms a heterodimer with PSMG1. The PSMG1-PSMG2 heterodimer interacts directly with the PSMA5 and PSMA7 proteasome alpha subunits. Post-translationally, degraded by the proteasome upon completion of 20S proteasome maturation.

It localises to the nucleus. Functionally, chaperone protein which promotes assembly of the 20S proteasome as part of a heterodimer with PSMG1. The PSMG1-PSMG2 heterodimer binds to the PSMA5 and PSMA7 proteasome subunits, promotes assembly of the proteasome alpha subunits into the heteroheptameric alpha ring and prevents alpha ring dimerization. The sequence is that of Proteasome assembly chaperone 2 from Bos taurus (Bovine).